The following is a 649-amino-acid chain: DNA mismatch repair protein MutL (649 aa).

Belongs to the DNA mismatch repair MutL/HexB family.

In terms of biological role, this protein is involved in the repair of mismatches in DNA. It is required for dam-dependent methyl-directed DNA mismatch repair. May act as a 'molecular matchmaker', a protein that promotes the formation of a stable complex between two or more DNA-binding proteins in an ATP-dependent manner without itself being part of a final effector complex. This Streptococcus pneumoniae (strain P1031) protein is DNA mismatch repair protein MutL.